The sequence spans 743 residues: Phosphoribosylformylglycinamidine synthase subunit PurL (743 aa).

His50 is a catalytic residue. Residues Tyr53 and Lys92 each contribute to the ATP site. A Mg(2+)-binding site is contributed by Glu94. Residues 95–98 (SHNH) and Arg117 contribute to the substrate site. His96 serves as the catalytic Proton acceptor. Asp118 serves as a coordination point for Mg(2+). Substrate is bound at residue Gln241. Position 269 (Asp269) interacts with Mg(2+). 313–315 (ESQ) serves as a coordination point for substrate. Residues Asp494 and Gly531 each coordinate ATP. Asn532 contacts Mg(2+). A substrate-binding site is contributed by Ser534.

This sequence belongs to the FGAMS family. Monomer. Part of the FGAM synthase complex composed of 1 PurL, 1 PurQ and 2 PurS subunits.

It is found in the cytoplasm. The enzyme catalyses N(2)-formyl-N(1)-(5-phospho-beta-D-ribosyl)glycinamide + L-glutamine + ATP + H2O = 2-formamido-N(1)-(5-O-phospho-beta-D-ribosyl)acetamidine + L-glutamate + ADP + phosphate + H(+). It participates in purine metabolism; IMP biosynthesis via de novo pathway; 5-amino-1-(5-phospho-D-ribosyl)imidazole from N(2)-formyl-N(1)-(5-phospho-D-ribosyl)glycinamide: step 1/2. Part of the phosphoribosylformylglycinamidine synthase complex involved in the purines biosynthetic pathway. Catalyzes the ATP-dependent conversion of formylglycinamide ribonucleotide (FGAR) and glutamine to yield formylglycinamidine ribonucleotide (FGAM) and glutamate. The FGAM synthase complex is composed of three subunits. PurQ produces an ammonia molecule by converting glutamine to glutamate. PurL transfers the ammonia molecule to FGAR to form FGAM in an ATP-dependent manner. PurS interacts with PurQ and PurL and is thought to assist in the transfer of the ammonia molecule from PurQ to PurL. The sequence is that of Phosphoribosylformylglycinamidine synthase subunit PurL from Sinorhizobium medicae (strain WSM419) (Ensifer medicae).